Reading from the N-terminus, the 311-residue chain is Ribonuclease Z (311 aa).

Positions 61, 63, 65, 66, 137, 207, and 263 each coordinate Zn(2+). Residue Asp65 is the Proton acceptor of the active site.

It belongs to the RNase Z family. Homodimer. The cofactor is Zn(2+).

The enzyme catalyses Endonucleolytic cleavage of RNA, removing extra 3' nucleotides from tRNA precursor, generating 3' termini of tRNAs. A 3'-hydroxy group is left at the tRNA terminus and a 5'-phosphoryl group is left at the trailer molecule.. Its function is as follows. Zinc phosphodiesterase, which displays some tRNA 3'-processing endonuclease activity. Probably involved in tRNA maturation, by removing a 3'-trailer from precursor tRNA. The protein is Ribonuclease Z of Thermococcus onnurineus (strain NA1).